A 264-amino-acid chain; its full sequence is Thymidylate synthase (264 aa).

DUMP is bound at residue Arg-21. His-51 provides a ligand contact to (6R)-5,10-methylene-5,6,7,8-tetrahydrofolate. 126–127 (RR) provides a ligand contact to dUMP. The active-site Nucleophile is Cys-146. Residues 166 to 169 (RSAD), Asn-177, and 207 to 209 (HIY) contribute to the dUMP site. Asp-169 is a binding site for (6R)-5,10-methylene-5,6,7,8-tetrahydrofolate. Ala-263 is a (6R)-5,10-methylene-5,6,7,8-tetrahydrofolate binding site.

It belongs to the thymidylate synthase family. Bacterial-type ThyA subfamily. In terms of assembly, homodimer.

Its subcellular location is the cytoplasm. The enzyme catalyses dUMP + (6R)-5,10-methylene-5,6,7,8-tetrahydrofolate = 7,8-dihydrofolate + dTMP. It functions in the pathway pyrimidine metabolism; dTTP biosynthesis. In terms of biological role, catalyzes the reductive methylation of 2'-deoxyuridine-5'-monophosphate (dUMP) to 2'-deoxythymidine-5'-monophosphate (dTMP) while utilizing 5,10-methylenetetrahydrofolate (mTHF) as the methyl donor and reductant in the reaction, yielding dihydrofolate (DHF) as a by-product. This enzymatic reaction provides an intracellular de novo source of dTMP, an essential precursor for DNA biosynthesis. In Brucella abortus (strain 2308), this protein is Thymidylate synthase.